A 366-amino-acid chain; its full sequence is Cobalt-precorrin-5B C(1)-methyltransferase (366 aa).

Belongs to the CbiD family.

The enzyme catalyses Co-precorrin-5B + S-adenosyl-L-methionine = Co-precorrin-6A + S-adenosyl-L-homocysteine. The protein operates within cofactor biosynthesis; adenosylcobalamin biosynthesis; cob(II)yrinate a,c-diamide from sirohydrochlorin (anaerobic route): step 6/10. In terms of biological role, catalyzes the methylation of C-1 in cobalt-precorrin-5B to form cobalt-precorrin-6A. The polypeptide is Cobalt-precorrin-5B C(1)-methyltransferase (Methanococcus maripaludis (strain C7 / ATCC BAA-1331)).